We begin with the raw amino-acid sequence, 755 residues long: MTANTRHRGLPFLHRNWLKATNHWSKMGNKASSQAQKRSQSQTGDSATSRPATDGSGSQQQQNESQQEEERATKRRRISNDYDGFPLYENYASTQRALRIEVLKISHKDAPRWKNGITAMNGSGITAAPVDIRNIAQIKARCKLTIYGHRNGEQIVLHVDSQLCDIRVFKNSAGAAPMVRFANMRPFSIPEEKIFLEREDDSVFGLAKCYSVSVELESAGDPSWPPKELVPPTSDEETFYNKGLLPQRQWVLTANIADIYESRNRKSVRLRIKKHAQQDMATNFLMDMDVRWLTPISSLARAKEQAKDIQPSIVAIDPDNPIPLLVNGPAAANANGVNGQHAPKPECDTQPNGTHNEGTSAEEPAEGELTPSRSRRARQEINYNVKQLWNNAVGRETRNNSNKRRRGGAYGEDHPPSDDRSITYLLPPEQVHTDKFACLICGAENERLSQLRAHYMCHPQYDFYFEYKPKMGGYYVTVKPTAREGERDGEGLRPRVYQLGLPVKPLDLERYVEGDESWVTSRLGPENGREVMLPGRGVPKKPLRRPKRRPLLVPKTTQPLFDPLSKVQLLPGQPLPQHPIDDSWLLLKHRDNLQDFIDLRPEEKEFLQEWDAFILRRHISSEQYLPRYFLRFVREKADWLVSKRSRGEEFSKLVATLLARRVLPERVVIEATQVLNDARGRLREQGGVIEGEGEGQRKKECTARLYHDTCVDNPEQARLEGRHWKCADCRIKCQQQQQQQQQQELQQAQQLQQRS.

Disordered stretches follow at residues 26–79, 333–377, and 392–420; these read KMGN…RRIS, NANG…SRRA, and AVGR…SDDR. Over residues 30 to 42 the composition is skewed to low complexity; that stretch reads KASSQAQKRSQSQ. Polar residues-rich tracts occupy residues 43 to 57 and 349 to 359; these read TGDS…DGSG and TQPNGTHNEGT. Residues 411–420 show a composition bias toward basic and acidic residues; sequence GEDHPPSDDR. The segment at 436 to 458 adopts a C2H2-type zinc-finger fold; the sequence is FACLICGAENERLSQLRAHYMCH. Residues 580–645 are polycomb protein VEFS-Box; that stretch reads IDDSWLLLKH…KADWLVSKRS (66 aa).

It belongs to the VEFS (VRN2-EMF2-FIS2-SU(Z)12) family. In terms of assembly, component of the polycomb repressive complex 2 (PRC2) that consists of four core subunits icluding EZH2, EED, SUZ12, and RBBP4, among which EZH2 is the catalytic subunit and which minimally requires EED and SUZ12 for catalysis.

The protein resides in the nucleus. In terms of biological role, component of the of the Polycomb Repressive Complex 2 (PRC2), a histone H3 lysine methyltransferase responsible for generating mono-, di-, and tri-methylation on Lys27 (H3K27me1, H3K27me2 and H3K27me3). The tri-methylated form is known to be critical in gene repression, and its proper placement is essential in defining repression patterns during development. SUZ12 is not a catalytic subunit but is required for the complex regulation of histone H3 lysine methylation by EZH2. In Chaetomium thermophilum (strain DSM 1495 / CBS 144.50 / IMI 039719) (Thermochaetoides thermophila), this protein is Polycomb protein SUZ12.